We begin with the raw amino-acid sequence, 532 residues long: tRNA-2-methylthio-N(6)-dimethylallyladenosine synthase (532 aa).

A disordered region spans residues 1–21 (MTSTVAHGAGSAGPADDVEPM). One can recognise an MTTase N-terminal domain in the interval 24–140 (RTYQVRTYGC…LPALLDRARH (117 aa)). [4Fe-4S] cluster is bound by residues Cys-33, Cys-69, Cys-103, Cys-177, Cys-181, and Cys-184. One can recognise a Radical SAM core domain in the interval 163–399 (RESAYAAWVS…VELQEQISLE (237 aa)). Residues 402–470 (RAIVGQRVEL…PHHLIADGGI (69 aa)) form the TRAM domain. Residues 510–532 (TSCGSAGGCGSADGAGSSAGDPQ) form a disordered region. Residues 523–532 (GAGSSAGDPQ) show a composition bias toward low complexity.

The protein belongs to the methylthiotransferase family. MiaB subfamily. As to quaternary structure, monomer. [4Fe-4S] cluster is required as a cofactor.

It localises to the cytoplasm. The catalysed reaction is N(6)-dimethylallyladenosine(37) in tRNA + (sulfur carrier)-SH + AH2 + 2 S-adenosyl-L-methionine = 2-methylsulfanyl-N(6)-dimethylallyladenosine(37) in tRNA + (sulfur carrier)-H + 5'-deoxyadenosine + L-methionine + A + S-adenosyl-L-homocysteine + 2 H(+). Its function is as follows. Catalyzes the methylthiolation of N6-(dimethylallyl)adenosine (i(6)A), leading to the formation of 2-methylthio-N6-(dimethylallyl)adenosine (ms(2)i(6)A) at position 37 in tRNAs that read codons beginning with uridine. The protein is tRNA-2-methylthio-N(6)-dimethylallyladenosine synthase of Mycobacterium ulcerans (strain Agy99).